The sequence spans 512 residues: FAD-linked oxidoreductase iacH (512 aa).

A signal peptide spans 1 to 22 (MVSLKACVVAYGFTLLPALVSG). Residues N39, N55, N69, N210, N217, N278, N295, and N367 are each glycosylated (N-linked (GlcNAc...) asparagine). The FAD-binding PCMH-type domain maps to 77 to 248 (LDTPDVQLVV…TSLEKKIYPG (172 aa)).

It belongs to the oxygen-dependent FAD-linked oxidoreductase family. FAD serves as cofactor.

It participates in secondary metabolite biosynthesis. FAD-linked oxidoreductase; part of the gene cluster that mediates the biosynthesis of iso-A82775C, a enylepoxycyclohexane and biosynthetic precursor of the chloropestolide anticancer natural products. Within the cluster, the prenyltransferase iacE prenylates siccayne to generate pestalodiol E, using dimethylallyl diphosphate (DMAPP) as cosubstrate. The probable oxidoreductase iacF is then involved in the epoxidation of pestalodiol F to pestalodiol F, which is further converted to pestalofone A by the short-chain dehydrogenase/reductase iacG. Iso-A82775C is subsequently generated from pestalofone A by the short-chain dehydrogenase/reductase iacC. Iso-A82775C is further condensed with maldoxin via a Diels-Alder reaction to produce the anticancer natural products chloropestolides A to E. This chain is FAD-linked oxidoreductase iacH, found in Pestalotiopsis fici (strain W106-1 / CGMCC3.15140).